The following is a 79-amino-acid chain: Small ribosomal subunit protein bS18 (79 aa).

The protein belongs to the bacterial ribosomal protein bS18 family. As to quaternary structure, part of the 30S ribosomal subunit. Forms a tight heterodimer with protein bS6.

Functionally, binds as a heterodimer with protein bS6 to the central domain of the 16S rRNA, where it helps stabilize the platform of the 30S subunit. This chain is Small ribosomal subunit protein bS18, found in Bacillus pumilus (strain SAFR-032).